The chain runs to 214 residues: Thymidylate kinase (214 aa).

12-19 provides a ligand contact to ATP; that stretch reads GGEGAGKS.

Belongs to the thymidylate kinase family.

It carries out the reaction dTMP + ATP = dTDP + ADP. In terms of biological role, phosphorylation of dTMP to form dTDP in both de novo and salvage pathways of dTTP synthesis. This is Thymidylate kinase from Gluconobacter oxydans (strain 621H) (Gluconobacter suboxydans).